Consider the following 272-residue polypeptide: Thymidine phosphorylase (272 aa).

It belongs to the thymidine/pyrimidine-nucleoside phosphorylase family. Homodimer.

It catalyses the reaction thymidine + phosphate = 2-deoxy-alpha-D-ribose 1-phosphate + thymine. Functionally, the enzymes which catalyze the reversible phosphorolysis of pyrimidine nucleosides are involved in the degradation of these compounds and in their utilization as carbon and energy sources, or in the rescue of pyrimidine bases for nucleotide synthesis. The chain is Thymidine phosphorylase (deoA) from Metamycoplasma hominis (Mycoplasma hominis).